We begin with the raw amino-acid sequence, 142 residues long: Large ribosomal subunit protein uL11 (142 aa).

Belongs to the universal ribosomal protein uL11 family. As to quaternary structure, part of the ribosomal stalk of the 50S ribosomal subunit. Interacts with L10 and the large rRNA to form the base of the stalk. L10 forms an elongated spine to which L12 dimers bind in a sequential fashion forming a multimeric L10(L12)X complex. One or more lysine residues are methylated.

Forms part of the ribosomal stalk which helps the ribosome interact with GTP-bound translation factors. This Photorhabdus laumondii subsp. laumondii (strain DSM 15139 / CIP 105565 / TT01) (Photorhabdus luminescens subsp. laumondii) protein is Large ribosomal subunit protein uL11.